Consider the following 255-residue polypeptide: tRNA (guanine-N(7)-)-methyltransferase (255 aa).

Residues 1 to 21 (MMHDDPNEAGLPPHDDAIPDE) form a disordered region. Glu86, Glu111, Asp138, and Asp161 together coordinate S-adenosyl-L-methionine. Residue Asp161 is part of the active site. Substrate-binding positions include Lys165, Asp197, and 232–235 (TKFE).

The protein belongs to the class I-like SAM-binding methyltransferase superfamily. TrmB family.

It catalyses the reaction guanosine(46) in tRNA + S-adenosyl-L-methionine = N(7)-methylguanosine(46) in tRNA + S-adenosyl-L-homocysteine. Its pathway is tRNA modification; N(7)-methylguanine-tRNA biosynthesis. Functionally, catalyzes the formation of N(7)-methylguanine at position 46 (m7G46) in tRNA. The chain is tRNA (guanine-N(7)-)-methyltransferase from Burkholderia lata (strain ATCC 17760 / DSM 23089 / LMG 22485 / NCIMB 9086 / R18194 / 383).